Reading from the N-terminus, the 1239-residue chain is WD repeat-containing protein 11 (1239 aa).

WD repeat units lie at residues 63 to 112, 115 to 158, 358 to 398, 476 to 515, 571 to 610, 713 to 750, 752 to 792, 798 to 836, and 898 to 944; these read RHKA…AHCE, EHSK…KLWK, TKTV…SKSS, RMCP…LHKE, NDEP…LLRE, GSMG…SRGV, THRG…MVSS, NVNY…ASYR, and SLSN…IQAF. A disordered region spans residues 1213–1239; that stretch reads EDLSQTEGTGTESSPADDTDNSLVNIE. The span at 1215-1226 shows a compositional bias: polar residues; that stretch reads LSQTEGTGTESS.

In terms of assembly, component of the complex WDR11.

The protein localises to the cytoplasm. It localises to the cytoskeleton. It is found in the cilium basal body. The protein resides in the nucleus. Its subcellular location is the cilium axoneme. The protein localises to the cytoplasmic vesicle. It localises to the golgi apparatus. It is found in the trans-Golgi network. Functionally, involved in the Hedgehog (Hh) signaling pathway, is essential for normal ciliogenesis. Regulates the proteolytic processing of gli3 and cooperates with the transcription factor emx1 in the induction of downstream Hh pathway gene expression and gonadotropin-releasing hormone production. WDR11 complex facilitates the tethering of Adaptor protein-1 complex (AP-1)-derived vesicles. The chain is WD repeat-containing protein 11 (wdr11) from Danio rerio (Zebrafish).